The chain runs to 178 residues: Large ribosomal subunit protein uL6 (178 aa).

This sequence belongs to the universal ribosomal protein uL6 family. In terms of assembly, part of the 50S ribosomal subunit.

Functionally, this protein binds to the 23S rRNA, and is important in its secondary structure. It is located near the subunit interface in the base of the L7/L12 stalk, and near the tRNA binding site of the peptidyltransferase center. This chain is Large ribosomal subunit protein uL6, found in Streptococcus pneumoniae (strain JJA).